The chain runs to 154 residues: Ribonuclease H (154 aa).

Residues 1–142 (MRKQIEIFTD…CDELAKQGAE (142 aa)) enclose the RNase H type-1 domain. Mg(2+) is bound by residues Asp10, Glu48, Asp70, and Asp134.

This sequence belongs to the RNase H family. As to quaternary structure, monomer. Mg(2+) serves as cofactor.

It localises to the cytoplasm. It carries out the reaction Endonucleolytic cleavage to 5'-phosphomonoester.. Its function is as follows. Endonuclease that specifically degrades the RNA of RNA-DNA hybrids. The sequence is that of Ribonuclease H from Actinobacillus succinogenes (strain ATCC 55618 / DSM 22257 / CCUG 43843 / 130Z).